A 380-amino-acid chain; its full sequence is Succinate--CoA ligase [ADP-forming] subunit beta 2 (380 aa).

An ATP-grasp domain is found at 9-235 (KQIFSKHGIR…YTEADQMERI (227 aa)). Residues Lys45, 52–54 (GRG), Glu91, Ile94, and Glu99 contribute to the ATP site. Mg(2+) is bound by residues Asn191 and Asp204. Substrate-binding positions include Asn255 and 312-314 (GIT).

The protein belongs to the succinate/malate CoA ligase beta subunit family. As to quaternary structure, heterotetramer of two alpha and two beta subunits. Mg(2+) serves as cofactor.

The enzyme catalyses succinate + ATP + CoA = succinyl-CoA + ADP + phosphate. It carries out the reaction GTP + succinate + CoA = succinyl-CoA + GDP + phosphate. The protein operates within carbohydrate metabolism; tricarboxylic acid cycle; succinate from succinyl-CoA (ligase route): step 1/1. In terms of biological role, succinyl-CoA synthetase functions in the citric acid cycle (TCA), coupling the hydrolysis of succinyl-CoA to the synthesis of either ATP or GTP and thus represents the only step of substrate-level phosphorylation in the TCA. The beta subunit provides nucleotide specificity of the enzyme and binds the substrate succinate, while the binding sites for coenzyme A and phosphate are found in the alpha subunit. The polypeptide is Succinate--CoA ligase [ADP-forming] subunit beta 2 (Archaeoglobus fulgidus (strain ATCC 49558 / DSM 4304 / JCM 9628 / NBRC 100126 / VC-16)).